Here is a 500-residue protein sequence, read N- to C-terminus: Protein FAM83F (500 aa).

The residue at position 2 (alanine 2) is an N-acetylalanine. A DUF1669 region spans residues 2 to 300; that stretch reads AESQLNCLDE…LYAISEEVDL (299 aa). A Phosphoserine modification is found at serine 4. 3 disordered regions span residues 82 to 109, 347 to 366, and 391 to 500; these read NARG…AYWP, QQRE…SGGE, and IPLG…CVIS. Over residues 397–419 the composition is skewed to basic and acidic residues; it reads SQKDGRMVSHMHRDLKPKSREAP. Composition is skewed to low complexity over residues 425 to 442 and 458 to 468; these read GEAA…SSRL and SSVSTETSEVE. Polar residues predominate over residues 477–500; the sequence is ENSSADISGKTSPSSAKPSNCVIS. Serine 479 carries the phosphoserine modification.

The protein belongs to the FAM83 family. Directly interacts (via DUF1669) with CSNK1A1 and CSNK1A1L.

It is found in the cell membrane. The chain is Protein FAM83F (FAM83F) from Homo sapiens (Human).